A 1823-amino-acid chain; its full sequence is AF4/FMR2 family member lilli (1823 aa).

Over residues 1 to 41 the composition is skewed to low complexity; sequence MAQQQQQQHQQQQHHQQQQQQLQQQQQLLQYNNNSYNLNYN. Disordered regions lie at residues 1–87, 126–305, 422–544, 570–626, 686–712, 753–1057, 1071–1287, 1322–1350, 1413–1448, 1480–1531, 1547–1567, and 1715–1744; these read MAQQ…DPEI, GFGS…ENHI, QQLT…KKKY, AGPG…WHLS, DSRH…YGVG, PKNQ…DIPT, AAAQ…LKPR, ARQH…GART, FMLK…AEQL, ENSA…AIAS, TCSE…APRL, and GNTP…IVPQ. Residues 53-79 show a composition bias toward basic and acidic residues; sequence REKYERQQGIQSDDRETSLFGEPRRLN. Low complexity-rich tracts occupy residues 126–147, 156–174, and 205–249; these read GFGS…SSAS, QQQQ…QQQQ, and PSSS…TSSP. Pro residues predominate over residues 426–438; that stretch reads PTPPKASPTPPVI. Threonine 434 carries the phosphothreonine modification. Basic and acidic residues predominate over residues 441–454; sequence LKTEKNHSLEKQDS. The segment covering 456–466 has biased composition (acidic residues); the sequence is LENDLELSESD. 2 positions are modified to phosphoserine: serine 463 and serine 465. Residues 475–531 show a composition bias toward low complexity; the sequence is SAGNSSNSSESDSSESGSEASSKGDPQQQQQQQQQHLLHQQQQHQQQQLLLQQQQQQ. The segment covering 582–598 has biased composition (gly residues); that stretch reads AAGGVGSGSGSTGGGSS. A compositionally biased stretch (low complexity) spans 599-612; sequence SSGMGTMSSSNSSN. Positions 764 to 785 are enriched in low complexity; sequence SDSGSGSSGSGSSSSDSAGGSS. Polar residues predominate over residues 818-827; sequence HKAQPNSVTL. Over residues 839 to 849 the composition is skewed to basic residues; sequence PRQKKPRKKKM. Serine 859 and serine 860 each carry phosphoserine. Low complexity-rich tracts occupy residues 877-906, 917-947, 962-979, 1002-1057, and 1102-1161; these read AATA…AAPA, QAQQ…SSQA, GTAS…VAAG, AAMA…DIPT, and NSSN…QLLQ. Residues 908–920 constitute a DNA-binding region (a.T hook); the sequence is KKGRGRPRKQAQQ. Residues serine 939 and serine 941 each carry the phosphoserine modification. A compositionally biased stretch (polar residues) spans 1172–1181; it reads TLKQSAQQRL. Composition is skewed to low complexity over residues 1182-1203 and 1253-1280; these read SSSD…ASSS and QQQQ…QQQQ. Residues 1334 to 1344 show a composition bias toward polar residues; it reads TQQNGHLSSRS. Positions 1480–1496 are enriched in polar residues; sequence ENSANASPNKLQQQNAR. Serine 1486 carries the phosphoserine modification. Over residues 1497 to 1531 the composition is skewed to low complexity; that stretch reads QLPLSQSQLQHQHQHQHQLQQQQSQSTATGHAIAS. The segment covering 1555 to 1565 has biased composition (pro residues); it reads TPPPAAPPPAP. Residues 1715–1735 are compositionally biased toward low complexity; the sequence is GNTPSSISPSNSVGSQGSGSN.

It belongs to the AF4 family.

The protein resides in the nucleus. Functionally, has a role in transcriptional regulation. Acts in parallel with the Ras/MAPK and the PI3K/PKB pathways in the control of cell identity and cellular growth. Essential for regulation of the cytoskeleton and cell growth but not for cell proliferation or growth rate. Required specifically for the microtubule-based basal transport of lipid droplets. Plays a partially redundant function downstream of Raf in cell fate specification in the developing eye. Pair-rule protein that regulates embryonic cellularization, gastrulation and segmentation. The chain is AF4/FMR2 family member lilli from Drosophila virilis (Fruit fly).